Reading from the N-terminus, the 168-residue chain is Small ribosomal subunit protein uS5c (168 aa).

The S5 DRBM domain maps to 17-80; sequence WQERVVQIRR…SDGKKKIVSV (64 aa).

This sequence belongs to the universal ribosomal protein uS5 family. Part of the 30S ribosomal subunit. Contacts protein S4.

It is found in the plastid. Its subcellular location is the chloroplast. Functionally, with S4 and S12 plays an important role in translational accuracy. The protein is Small ribosomal subunit protein uS5c (rps5) of Rhodomonas salina (Cryptomonas salina).